The primary structure comprises 332 residues: Stage II sporulation protein B (332 aa).

The span at 1-10 (MKKRKNKKNS) shows a compositional bias: basic residues. The tract at residues 1–71 (MKKRKNKKNS…EHPDEDEFNW (71 aa)) is disordered. Residues 11 to 27 (KAAEKALKVTINGKEET) are compositionally biased toward basic and acidic residues. The chain crosses the membrane as a helical span at residues 112 to 132 (AATIAFAAVIGTGLGLFALNI). The segment at 139-174 (SAPASLEDSLGSQTAKAGDTSADKQTSGAEKQAAQT) is disordered. The segment covering 161 to 174 (DKQTSGAEKQAAQT) has biased composition (polar residues). The SPOR domain maps to 175–250 (EGTYKTYAVQ…SDFEAWGGKE (76 aa)).

It is found in the cell membrane. With respect to regulation, appears to be degraded early in engulfment, in correlation with its loss from polar septa. Facilitates the rapid and spatially regulated dissolution of septal peptidoglycan. This Bacillus subtilis (strain 168) protein is Stage II sporulation protein B.